The primary structure comprises 131 residues: Small ribosomal subunit protein uS8 (131 aa).

This sequence belongs to the universal ribosomal protein uS8 family. As to quaternary structure, part of the 30S ribosomal subunit. Contacts proteins S5 and S12.

Its function is as follows. One of the primary rRNA binding proteins, it binds directly to 16S rRNA central domain where it helps coordinate assembly of the platform of the 30S subunit. The sequence is that of Small ribosomal subunit protein uS8 from Clostridium novyi (strain NT).